The chain runs to 327 residues: UPF0665 family protein C23C4.06c (327 aa).

This sequence belongs to the UPF0665 family.

Its subcellular location is the cytoplasm. It is found in the nucleus. The sequence is that of UPF0665 family protein C23C4.06c from Schizosaccharomyces pombe (strain 972 / ATCC 24843) (Fission yeast).